The chain runs to 1379 residues: Increased rDNA silencing protein 4 homolog (1379 aa).

Disordered regions lie at residues 1-25 (MDAIHPVSLRNSKRHPLLHSERNLS), 138-159 (TSTRKRSLTVPTPRTSFPHHPR), 240-314 (EFDF…PLPS), 337-370 (SQPFKSAEPLSSAIPLPNPMSEKMRNGASKQAIM), 534-573 (ASKRAALSQQTESASKSSSNISEMCDSHPPSNFSISASQQ), 768-816 (TDLH…NDIG), 1047-1110 (DAPS…KDSQ), and 1168-1208 (AVHE…DGKY). The span at 250–259 (PSDKNLEKLK) shows a compositional bias: basic and acidic residues. The span at 262 to 287 (ASKQASESQSLKNMESLSLARSSPIL) shows a compositional bias: polar residues. Over residues 541–555 (SQQTESASKSSSNIS) the composition is skewed to low complexity. Polar residues predominate over residues 562-573 (PPSNFSISASQQ). Over residues 770-780 (LHRKPRRKHKS) the composition is skewed to basic residues. Positions 793–802 (DESPQSDEVE) are enriched in acidic residues. The EH domain maps to 1240–1329 (AANKGYLLSK…DSVWLSSKRM (90 aa)). The EF-hand domain occupies 1273-1308 (APTSVLAKIYDLVDRHHTGVLGRDEFIVGMFLIDQY).

The protein belongs to the IRS4 family.

Functionally, positive regulator of phosphatidylinositol 4,5-bisphosphate turnover and negatively regulates signaling through the cell integrity pathway. Involved in rDNA silencing. This is Increased rDNA silencing protein 4 homolog from Schizosaccharomyces pombe (strain 972 / ATCC 24843) (Fission yeast).